Reading from the N-terminus, the 228-residue chain is Chromatin remodeling protein SHL (228 aa).

In terms of domain architecture, BAH spans 21–137 (KSIQEGDAVL…STTGAFDPDR (117 aa)). The PHD-type zinc finger occupies 139 to 190 (TVFCKCEMPYNPDDLMVQCEECSEWFHPSCIGTTIEEAKKPDNFYCEECSPQ). Residues 191 to 203 (QQNLHNSNSTSNN) are compositionally biased toward polar residues. The interval 191–228 (QQNLHNSNSTSNNRDAKVNGKRSLEVTKSKNKHTKRPG) is disordered. Basic and acidic residues predominate over residues 204-218 (RDAKVNGKRSLEVTK). The short motif at 210–217 (GKRSLEVT) is the Nuclear localization signal element. Residues 219-228 (SKNKHTKRPG) are compositionally biased toward basic residues.

Belongs to the SHL1/EBS protein family. In terms of assembly, recognizes di- and trimethylated histone H3 at lysine 4. Interacts with HDA6. Interacts with DEK3. As to expression, expressed ubiquitously. Mostly expressed in roots, stems, leaves and flowers, and, to a lower extent, in siliques.

Its subcellular location is the nucleus. Its function is as follows. Chromatin remodeling factor that binds to methylated histone (e.g. H3K4me2/3) to prevent their acetylation (e.g. H3K9K14Ac), likely by recruiting histone deacetylase (HDAC) complexes, and thus regulate the transcription of target genes. Required during development and for fertility, probably by modulating developmental gene expression. Promotes development speed, but at fitness cost. Involved in the chromatin-mediated repression of floral initiation and controls genes regulating flowering. Negatively regulates the expression of the floral integrator SOC1, by preventing high levels of H3 acetylation, thus maintaining an inactive chromatin conformation. The chain is Chromatin remodeling protein SHL from Arabidopsis thaliana (Mouse-ear cress).